A 430-amino-acid chain; its full sequence is Paraneoplastic antigen-like protein 8A (430 aa).

Over residues 219 to 228 (WKNTEDHGDP) the composition is skewed to basic and acidic residues. Disordered stretches follow at residues 219 to 270 (WKNT…NSNY), 313 to 364 (DPSD…RKKK), and 392 to 430 (GLGA…SRKL). Basic residues predominate over residues 232-250 (LVRRPGGKIRSRRRKQKKN). A compositionally biased stretch (polar residues) spans 261 to 270 (SQGSNYNSNY).

The protein belongs to the PNMA family.

This is Paraneoplastic antigen-like protein 8A from Mus musculus (Mouse).